Consider the following 129-residue polypeptide: Large-conductance mechanosensitive channel (129 aa).

3 consecutive transmembrane segments (helical) span residues 8–28 (FIMR…AAFT), 30–50 (IVKS…AGAV), and 67–87 (GAVL…FLII).

This sequence belongs to the MscL family. In terms of assembly, homopentamer.

It localises to the cell membrane. Functionally, channel that opens in response to stretch forces in the membrane lipid bilayer. May participate in the regulation of osmotic pressure changes within the cell. This Oenococcus oeni (strain ATCC BAA-331 / PSU-1) protein is Large-conductance mechanosensitive channel.